A 448-amino-acid chain; its full sequence is F-box/FBD/LRR-repeat protein At2g04230 (448 aa).

One can recognise an F-box domain in the interval 12–64; the sequence is EDRISDLPDALLLQILSSLPTENAIATSVLSKRWRSLWTMLPKLKFDSNFNPV. LRR repeat units follow at residues 72–98, 149–176, 177–202, 204–225, 226–251, 271–296, and 319–345; these read PTMFSENVYKTLSLHKAPVLESLHLSF, ILKLKCAIDLDFPSRVCLKSLRKLYLDQ, VHFKDEESVCNLLCGCPSLQDLVVHR, SNADVATFTIASPSLQRLTIED, LRQEGGYGNGSYVINAPGLKYLNING, ISNVSGITNENILESLTSAKRLILHL, and THEREWWNLLSIMLDSSPKLQILKLTD. One can recognise an FBD domain in the interval 359–410; the sequence is KWNPPKCAPECLLFHLETFLWIGYEWQRGDEKEVATYILENARRLKKATFST.

This chain is F-box/FBD/LRR-repeat protein At2g04230, found in Arabidopsis thaliana (Mouse-ear cress).